We begin with the raw amino-acid sequence, 702 residues long: Elongation factor G (702 aa).

The region spanning 8–290 (TRYRNIGISA…AVIEYLPAPT (283 aa)) is the tr-type G domain. GTP is bound by residues 17-24 (AHIDAGKT), 88-92 (DTPGH), and 142-145 (NKMD).

This sequence belongs to the TRAFAC class translation factor GTPase superfamily. Classic translation factor GTPase family. EF-G/EF-2 subfamily.

It localises to the cytoplasm. In terms of biological role, catalyzes the GTP-dependent ribosomal translocation step during translation elongation. During this step, the ribosome changes from the pre-translocational (PRE) to the post-translocational (POST) state as the newly formed A-site-bound peptidyl-tRNA and P-site-bound deacylated tRNA move to the P and E sites, respectively. Catalyzes the coordinated movement of the two tRNA molecules, the mRNA and conformational changes in the ribosome. The chain is Elongation factor G from Erwinia tasmaniensis (strain DSM 17950 / CFBP 7177 / CIP 109463 / NCPPB 4357 / Et1/99).